Reading from the N-terminus, the 485-residue chain is MRVLHVCSELYPILKTGGLADVTAALPPALASFGVDSRVLVPGFPAFMNAIKDKQLLINIPSRFGAEEINIFLAKIPNTKIDIYVVDAPSLFARPGNPYADSSNQAYADNYLRFALLGWVAARISEGLDAKWKPEVVHSHDWHAGLVPAYIKASELASGKKAVKTVFTVHNLAYQGLFPMSVFAELDLPGIFLSMNGLEFYGQVSFMKAGLYFADKITTVSPTYAKEIQSYEQGCGLEGLLADRHNDLYGVLNGVDPQVWNPKKDTLIEANYSVTTANVGKAKCKTALQAMTGLAKKEDAVVFGIVTRLTEQKGLNLLIEAIGEITSRGGQVVLLGSGDKALEEAFLAAAKKSPKSIAVQIGYDEEQAHRIIAGSDVILVPSRFEPCGLTQLYGLTYGTLPLVHKVGGLADTVTDSSLENLADGTATGFVFDEFSVESLTLAIRRAFALYNRKADWKKVRKTAMQQKVDWNAAADKIHQIYSQLV.

Lys15 provides a ligand contact to ADP-alpha-D-glucose.

It belongs to the glycosyltransferase 1 family. Bacterial/plant glycogen synthase subfamily.

It carries out the reaction [(1-&gt;4)-alpha-D-glucosyl](n) + ADP-alpha-D-glucose = [(1-&gt;4)-alpha-D-glucosyl](n+1) + ADP + H(+). The protein operates within glycan biosynthesis; glycogen biosynthesis. Synthesizes alpha-1,4-glucan chains using ADP-glucose. This Francisella philomiragia subsp. philomiragia (strain ATCC 25017 / CCUG 19701 / FSC 153 / O#319-036) protein is Glycogen synthase.